Here is a 212-residue protein sequence, read N- to C-terminus: Pyridoxine/pyridoxamine 5'-phosphate oxidase (212 aa).

FMN is bound by residues 57–62 (RMVLLK), 72–73 (YT), Arg-78, Lys-79, and Gln-101. Lys-62 provides a ligand contact to substrate. Positions 119, 123, and 127 each coordinate substrate. Residues 136-137 (QS) and Trp-181 contribute to the FMN site. 187 to 189 (RLH) serves as a coordination point for substrate. An FMN-binding site is contributed by Arg-191.

This sequence belongs to the pyridoxamine 5'-phosphate oxidase family. Homodimer. FMN is required as a cofactor.

It catalyses the reaction pyridoxamine 5'-phosphate + O2 + H2O = pyridoxal 5'-phosphate + H2O2 + NH4(+). The catalysed reaction is pyridoxine 5'-phosphate + O2 = pyridoxal 5'-phosphate + H2O2. The protein operates within cofactor metabolism; pyridoxal 5'-phosphate salvage; pyridoxal 5'-phosphate from pyridoxamine 5'-phosphate: step 1/1. It functions in the pathway cofactor metabolism; pyridoxal 5'-phosphate salvage; pyridoxal 5'-phosphate from pyridoxine 5'-phosphate: step 1/1. In terms of biological role, catalyzes the oxidation of either pyridoxine 5'-phosphate (PNP) or pyridoxamine 5'-phosphate (PMP) into pyridoxal 5'-phosphate (PLP). The sequence is that of Pyridoxine/pyridoxamine 5'-phosphate oxidase from Erythrobacter litoralis (strain HTCC2594).